Here is a 144-residue protein sequence, read N- to C-terminus: Putative golgin subfamily A member 2B (144 aa).

Disordered regions lie at residues 1-20 (MDSE…PEDL) and 95-132 (SCGR…EAAG). Positions 110-131 (AEGGGVHQQAGPGQGRGEGEAA) are enriched in gly residues.

The protein belongs to the GOLGA2 family.

The sequence is that of Putative golgin subfamily A member 2B (GOLGA2P5) from Homo sapiens (Human).